Consider the following 646-residue polypeptide: FAD-binding monooxygenase prhK (646 aa).

N46 is a glycosylation site (N-linked (GlcNAc...) asparagine). Residues 80–97 (IIIIGAGFGGLLFAVRLI) traverse the membrane as a helical segment. FAD is bound by residues 119-122 (TWYW), 131-132 (DT), and Y137. An NADP(+)-binding site is contributed by 129-131 (MCD). NADP(+) is bound by residues 275–281 (TGATAIQ) and 298–299 (RT). 3 N-linked (GlcNAc...) asparagine glycosylation sites follow: N429, N483, and N529.

This sequence belongs to the FAD-binding monooxygenase family. It depends on FAD as a cofactor.

It is found in the membrane. The catalysed reaction is preaustinoid A + AH2 + O2 = preaustinoid A1 + A + H2O. It functions in the pathway secondary metabolite biosynthesis; terpenoid biosynthesis. Functionally, FAD-binding monooxygenase; part of the gene cluster that mediates the biosynthesis of paraherquonin, a meroterpenoid with a unique, highly congested hexacyclic molecular architecture. The first step of the pathway is the synthesis of 3,5-dimethylorsellinic acid (DMOA) by the polyketide synthase prhL. Synthesis of DMOA is followed by farnesylation by the prenyltransferase prhE, methylesterification by the methyl-transferase prhM, epoxidation of the prenyl chain by the flavin-dependent monooxygenase prhF, and cyclization of the farnesyl moiety by the terpene cyclase prhH, to yield the tetracyclic intermediate, protoaustinoid A. The short chain dehydrogenase prhI then oxidizes the C-3 alcohol group of the terpene cyclase product to transform protoaustinoid A into protoaustinoid B. The FAD-binding monooxygenase prhJ catalyzes the oxidation of protoaustinoid B into preaustinoid A which is further oxidized into preaustinoid A1 by FAD-binding monooxygenase phrK. Finally, prhA leads to berkeleydione via the berkeleyone B intermediate. PrhA is a multifunctional dioxygenase that first desaturates at C5-C6 to form berkeleyone B, followed by rearrangement of the A/B-ring to form the cycloheptadiene moiety in berkeleydione. Berkeleydione serves as the key intermediate for the biosynthesis of paraherquonin as well as many other meroterpenoids. The cytochrome P450 monooxygenases prhB, prhD, and prhN, as well as the isomerase prhC, are probably involved in the late stage of paraherquonin biosynthesis, after the production of berkeleydione. Especially prhC might be a multifunctional enzyme that catalyzes the D-ring expansion via intramolecular methoxy rearrangement, as well as the hydrolysis of the expanded D-ring. This chain is FAD-binding monooxygenase prhK, found in Penicillium brasilianum.